The following is a 161-amino-acid chain: Large ribosomal subunit protein uL10 (161 aa).

Belongs to the universal ribosomal protein uL10 family. As to quaternary structure, part of the ribosomal stalk of the 50S ribosomal subunit. The N-terminus interacts with L11 and the large rRNA to form the base of the stalk. The C-terminus forms an elongated spine to which L12 dimers bind in a sequential fashion forming a multimeric L10(L12)X complex.

In terms of biological role, forms part of the ribosomal stalk, playing a central role in the interaction of the ribosome with GTP-bound translation factors. The sequence is that of Large ribosomal subunit protein uL10 from Malacoplasma penetrans (strain HF-2) (Mycoplasma penetrans).